A 229-amino-acid polypeptide reads, in one-letter code: PKHD-type hydroxylase RPA3479 (229 aa).

One can recognise a Fe2OG dioxygenase domain in the interval 78-180 (QIFPPLFNRY…RVASFFWLQS (103 aa)). Residues histidine 98, aspartate 100, and histidine 161 each coordinate Fe cation. Arginine 171 provides a ligand contact to 2-oxoglutarate.

Fe(2+) is required as a cofactor. L-ascorbate serves as cofactor.

In Rhodopseudomonas palustris (strain ATCC BAA-98 / CGA009), this protein is PKHD-type hydroxylase RPA3479.